The following is a 380-amino-acid chain: Lipid-A-disaccharide synthase (380 aa).

Belongs to the LpxB family.

It catalyses the reaction a lipid X + a UDP-2-N,3-O-bis[(3R)-3-hydroxyacyl]-alpha-D-glucosamine = a lipid A disaccharide + UDP + H(+). It functions in the pathway bacterial outer membrane biogenesis; LPS lipid A biosynthesis. Its function is as follows. Condensation of UDP-2,3-diacylglucosamine and 2,3-diacylglucosamine-1-phosphate to form lipid A disaccharide, a precursor of lipid A, a phosphorylated glycolipid that anchors the lipopolysaccharide to the outer membrane of the cell. The protein is Lipid-A-disaccharide synthase of Vibrio vulnificus (strain CMCP6).